Consider the following 350-residue polypeptide: DNA primase small subunit PriS (350 aa).

Catalysis depends on residues aspartate 97, aspartate 99, and aspartate 251.

Belongs to the eukaryotic-type primase small subunit family. As to quaternary structure, heterodimer of a small subunit (PriS) and a large subunit (PriL). The cofactor is Mg(2+). Mn(2+) is required as a cofactor. Requires Zn(2+) as cofactor.

Its function is as follows. Catalytic subunit of DNA primase, an RNA polymerase that catalyzes the synthesis of short RNA molecules used as primers for DNA polymerase during DNA replication. The small subunit contains the primase catalytic core and has DNA synthesis activity on its own. Binding to the large subunit stabilizes and modulates the activity, increasing the rate of DNA synthesis while decreasing the length of the DNA fragments, and conferring RNA synthesis capability. The DNA polymerase activity may enable DNA primase to also catalyze primer extension after primer synthesis. May also play a role in DNA repair. The polypeptide is DNA primase small subunit PriS (Methanocaldococcus jannaschii (strain ATCC 43067 / DSM 2661 / JAL-1 / JCM 10045 / NBRC 100440) (Methanococcus jannaschii)).